A 65-amino-acid polypeptide reads, in one-letter code: Large ribosomal subunit protein uL29 (65 aa).

The protein belongs to the universal ribosomal protein uL29 family.

The chain is Large ribosomal subunit protein uL29 from Parabacteroides distasonis (strain ATCC 8503 / DSM 20701 / CIP 104284 / JCM 5825 / NCTC 11152).